The primary structure comprises 355 residues: Protein RecA (355 aa).

67–74 serves as a coordination point for ATP; the sequence is GPESSGKT.

Belongs to the RecA family.

It is found in the cytoplasm. Its function is as follows. Can catalyze the hydrolysis of ATP in the presence of single-stranded DNA, the ATP-dependent uptake of single-stranded DNA by duplex DNA, and the ATP-dependent hybridization of homologous single-stranded DNAs. It interacts with LexA causing its activation and leading to its autocatalytic cleavage. In Histophilus somni (strain 2336) (Haemophilus somnus), this protein is Protein RecA.